The chain runs to 532 residues: MIRNLTKLTKFTIGNRFYQSSSKGRFSGKNGNNAFKSIVGVSVGVSALFAGCVFLDQEKEPESTPSIDVKEKKSQPPKTKEDYQKKMDEEYDIEQFKYVIIGGGTAAYHAIDKILENDKEATILLISKEYEVPYQRPPLTKSLWATKDDNVVNTLNFSDWSGKKQNLLYEQESAYGNEILQFIRTKKVIDLHIDEKLVLLNDGKLIRYDKCLIATGGEPRQLKFTSTNDKKISTYRTVEDFRKLYEVVKDGGKHVTVLGGGFLGSELTCAINSNFQDKNIKIDQIFPESGVLSTLFPDYLSKYATEEIIKSGVNVHTGTLIKDVVDNSENGRLTVTLNNGKTFETDHVVVAAGIIPNTNVVKSTTLEIDPINGGYVVNPELQARTDLYVAGDVASYYDFSLGVRRRVEHHDHARATGEMAGSNMSTKDTPAPYTYQPFFWSDLTPGVGFEAVGNTSSKLKTFSVWEKPSSDETKQSYTKGNIYYLNDNNNVVGVLCYGNYGKMDTARDLILKRRTIEDLNQLQHAIDFDEHH.

The transit peptide at 1–26 (MIRNLTKLTKFTIGNRFYQSSSKGRF) directs the protein to the mitochondrion. Residues 63–84 (STPSIDVKEKKSQPPKTKEDYQ) form a disordered region. The FAD-dependent oxidoreductase stretch occupies residues 98-440 (YVIIGGGTAA…APYTYQPFFW (343 aa)). Residues 102 to 106 (GGGTA), 128 to 129 (KE), arginine 136, and lysine 141 contribute to the FAD site. Tryptophan 160 contributes to the NAD(+) binding site. Positions 188 and 236 each coordinate FAD. NAD(+) is bound by residues 260 to 263 (GGFL), glutamate 288, and glycine 353. FAD is bound at residue aspartate 392. Residues 400-406 (SLGVRRR) carry the Nuclear localization signal motif. NAD(+) contacts are provided by residues 408–409 (EH), tryptophan 440, and glutamate 450. Residues 409-410 (HH) and tryptophan 440 contribute to the FAD site.

Belongs to the FAD-dependent oxidoreductase family. The cofactor is FAD.

Its subcellular location is the mitochondrion. The protein resides in the cytoplasm. The protein localises to the nucleus. The catalysed reaction is A + NADH + H(+) = AH2 + NAD(+). Probable NADH oxidoreductase that acts as a caspase-independent mitochondrial effector of apoptotic cell death. The chain is Apoptosis-inducing factor 1, mitochondrial (aif) from Dictyostelium discoideum (Social amoeba).